The chain runs to 843 residues: Vacuolar membrane protease (843 aa).

The Cytoplasmic segment spans residues 1–16; it reads MTNSRRHIFERICAKA. Residues 17 to 37 form a helical membrane-spanning segment; sequence FQSSLTCSIFGFTVLLILYLL. The Vacuolar segment spans residues 38–347; sequence DWKRIAQVPG…LAFGKYWQLN (310 aa). Asparagine 96, asparagine 109, and asparagine 117 each carry an N-linked (GlcNAc...) asparagine glycan. Zn(2+)-binding residues include histidine 147 and aspartate 159. Glutamate 191 serves as the catalytic Proton acceptor. A Zn(2+)-binding site is contributed by glutamate 192. An N-linked (GlcNAc...) asparagine glycan is attached at asparagine 209. Glutamate 217 lines the Zn(2+) pocket. The N-linked (GlcNAc...) asparagine glycan is linked to asparagine 275. Position 292 (histidine 292) interacts with Zn(2+). Asparagine 322 is a glycosylation site (N-linked (GlcNAc...) asparagine). The chain crosses the membrane as a helical span at residues 348 to 368; sequence LPIYQVLNIIFAVICPIVLLL. Over 369-386 the chain is Cytoplasmic; it reads TLIRFPSLYEQLKKPRYT. Residues 387–407 traverse the membrane as a helical segment; the sequence is VCFVVSCIFVSIFDTLTVLLL. At 408–417 the chain is on the vacuolar side; sequence TWINPYVINS. The chain crosses the membrane as a helical span at residues 418–438; that stretch reads HTGLILALFYLTNLIALAFSF. The Cytoplasmic segment spans residues 439–456; it reads RAAATHSKLSSEDLSSIE. Residues 457-477 traverse the membrane as a helical segment; sequence IVFIWYAQILWYLVFIVSVIL. The Vacuolar segment spans residues 478-484; it reads SIYFQLG. A helical membrane pass occupies residues 485 to 505; it reads STYWVTLSYLCTFTCCIMTII. The Cytoplasmic segment spans residues 506–566; the sequence is RINYFVDNVV…NRAHVKLIDN (61 aa). Residues 567-587 traverse the membrane as a helical segment; that stretch reads IWTVIYFIFNVPFPVFLCYDI. Residues 588–608 are Vacuolar-facing; that stretch reads LVETILPAGSQTLTDSVFSSK. A helical transmembrane segment spans residues 609-629; that stretch reads LYKLVIFVVFLSLVNSGPFIF. The Cytoplasmic portion of the chain corresponds to 630–636; it reads RALSKKS. Residues 637-657 form a helical membrane-spanning segment; sequence LAVLTMLWITLFVQALSVNPF. Topologically, residues 658–843 are vacuolar; sequence TESAPLKLSF…LLKVKSSIVI (186 aa). Residues asparagine 677, asparagine 703, asparagine 707, asparagine 754, and asparagine 788 are each glycosylated (N-linked (GlcNAc...) asparagine).

It belongs to the peptidase M28 family. Requires Zn(2+) as cofactor.

The protein resides in the membrane. The protein localises to the vacuole membrane. Functionally, may be involved in vacuolar sorting and osmoregulation. This is Vacuolar membrane protease from Schizosaccharomyces pombe (strain 972 / ATCC 24843) (Fission yeast).